The following is a 114-amino-acid chain: MYPFYKYIFSFWFFFLVEYVVTFRLFLSLKSGNIFLSTQQRFKDATKMCFHHQMLSSSVEPFFSLYFNHVPYMWSCFNFFSSSPFPRCTKNSPEKKKFKRGLPISSKYTDGKKR.

A helical membrane pass occupies residues Tyr-7 to Leu-27. Residues Lys-90–Arg-114 form a disordered region.

The protein resides in the membrane. This is an uncharacterized protein from Saccharomyces cerevisiae (strain ATCC 204508 / S288c) (Baker's yeast).